Reading from the N-terminus, the 387-residue chain is Chaperone protein DnaJ (387 aa).

One can recognise a J domain in the interval 5 to 70 (DYYEVLGLQK…DKKAKYDQFG (66 aa)). The CR-type zinc finger occupies 144–226 (GCEKEISITR…CKGKGTVRKN (83 aa)). Zn(2+) contacts are provided by C157, C160, C174, C177, C200, C203, C214, and C217. CXXCXGXG motif repeat units follow at residues 157–164 (CETCHGTG), 174–181 (CPKCNGSG), 200–207 (CDQCGGTG), and 214–221 (CPDCKGKG).

The protein belongs to the DnaJ family. As to quaternary structure, homodimer. The cofactor is Zn(2+).

Its subcellular location is the cytoplasm. Functionally, participates actively in the response to hyperosmotic and heat shock by preventing the aggregation of stress-denatured proteins and by disaggregating proteins, also in an autonomous, DnaK-independent fashion. Unfolded proteins bind initially to DnaJ; upon interaction with the DnaJ-bound protein, DnaK hydrolyzes its bound ATP, resulting in the formation of a stable complex. GrpE releases ADP from DnaK; ATP binding to DnaK triggers the release of the substrate protein, thus completing the reaction cycle. Several rounds of ATP-dependent interactions between DnaJ, DnaK and GrpE are required for fully efficient folding. Also involved, together with DnaK and GrpE, in the DNA replication of plasmids through activation of initiation proteins. The polypeptide is Chaperone protein DnaJ (Clostridium perfringens (strain 13 / Type A)).